The sequence spans 572 residues: Triacylglycerol lipase OBL1 (572 aa).

Residues 110–130 (GYLVEFFLNLFSLNGNFLGLL) traverse the membrane as a helical segment. The segment at 320-356 (IPPSESSKSSTSFSDSDAHTGSDLSSDSERPTDTRKK) is disordered. Positions 323 to 334 (SESSKSSTSFSD) are enriched in low complexity. Positions 346 to 356 (DSERPTDTRKK) are enriched in basic and acidic residues. Residues 391 to 395 (GHSLG) carry the GXSXG motif. The active-site Nucleophile is Ser393. Residues Asp457 and His550 each act as charge relay system in the active site.

The protein belongs to the AB hydrolase superfamily. Lipase family. Expressed in pollen grains and pollen tubes.

The protein resides in the lipid droplet. It is found in the membrane. It carries out the reaction 1,2-di-(9Z-octadecenoyl)-glycerol + (9Z)-octadecenoate + H(+) = 1,2,3-tri-(9Z-octadecenoyl)-glycerol + H2O. It catalyses the reaction 1-(9Z-octadecenoyl)-glycerol + H2O = glycerol + (9Z)-octadecenoate + H(+). Its function is as follows. Acid lipase that can hydrolyze a range of triacylglycerols without a clear preference for acyl-chains. Can also cleave 1,2-diacylglycerol, 1,3-diacylglycerol and 1-monoacylglycerol, but not phosphatidylcholine, phosphatidylethanolamine, or sterol esters. Required for pollen tube growth. Triacylglycerol hydrolysis by OBL1 may provide acyl groups for the synthesis of membrane lipids in growing pollen tubes. The sequence is that of Triacylglycerol lipase OBL1 from Nicotiana tabacum (Common tobacco).